Here is a 57-residue protein sequence, read N- to C-terminus: MSPQTETKASVGFKAGVKDYKLTYYTPDYETKDTDILAAFRVTPQPGVPPEEAGAAV.

A propeptide spanning residues 1–2 is cleaved from the precursor; it reads MS. Position 3 is an N-acetylproline (P3). K14 bears the N6,N6,N6-trimethyllysine mark.

This sequence belongs to the RuBisCO large chain family. Type I subfamily. Heterohexadecamer of 8 large chains and 8 small chains.

The protein localises to the plastid. Its subcellular location is the chloroplast. The enzyme catalyses 2 (2R)-3-phosphoglycerate + 2 H(+) = D-ribulose 1,5-bisphosphate + CO2 + H2O. The catalysed reaction is D-ribulose 1,5-bisphosphate + O2 = 2-phosphoglycolate + (2R)-3-phosphoglycerate + 2 H(+). RuBisCO catalyzes two reactions: the carboxylation of D-ribulose 1,5-bisphosphate, the primary event in carbon dioxide fixation, as well as the oxidative fragmentation of the pentose substrate in the photorespiration process. Both reactions occur simultaneously and in competition at the same active site. The chain is Ribulose bisphosphate carboxylase large chain (rbcL) from Camellia sinensis (Tea plant).